The sequence spans 323 residues: Elongation factor P--(R)-beta-lysine ligase (323 aa).

76–78 is a substrate binding site; that stretch reads SPE. ATP is bound by residues 100 to 102 and Asn-109; that span reads RNE. Tyr-118 contacts substrate. ATP is bound at residue 242–243; it reads EL. Glu-249 lines the substrate pocket. An ATP-binding site is contributed by Gly-298.

The protein belongs to the class-II aminoacyl-tRNA synthetase family. EpmA subfamily. In terms of assembly, homodimer.

It catalyses the reaction D-beta-lysine + L-lysyl-[protein] + ATP = N(6)-((3R)-3,6-diaminohexanoyl)-L-lysyl-[protein] + AMP + diphosphate + H(+). Functionally, with EpmB is involved in the beta-lysylation step of the post-translational modification of translation elongation factor P (EF-P). Catalyzes the ATP-dependent activation of (R)-beta-lysine produced by EpmB, forming a lysyl-adenylate, from which the beta-lysyl moiety is then transferred to the epsilon-amino group of a conserved specific lysine residue in EF-P. This is Elongation factor P--(R)-beta-lysine ligase from Actinobacillus succinogenes (strain ATCC 55618 / DSM 22257 / CCUG 43843 / 130Z).